Reading from the N-terminus, the 144-residue chain is 3-dehydroquinate dehydratase (144 aa).

Residue Tyr-23 is the Proton acceptor of the active site. Substrate is bound by residues Asn-74, His-80, and Asp-87. His-101 serves as the catalytic Proton donor. Substrate contacts are provided by residues 102–103 (LS) and Arg-112.

It belongs to the type-II 3-dehydroquinase family. Homododecamer.

It carries out the reaction 3-dehydroquinate = 3-dehydroshikimate + H2O. It participates in metabolic intermediate biosynthesis; chorismate biosynthesis; chorismate from D-erythrose 4-phosphate and phosphoenolpyruvate: step 3/7. Functionally, catalyzes a trans-dehydration via an enolate intermediate. This chain is 3-dehydroquinate dehydratase, found in Mesorhizobium japonicum (strain LMG 29417 / CECT 9101 / MAFF 303099) (Mesorhizobium loti (strain MAFF 303099)).